Consider the following 105-residue polypeptide: Large ribosomal subunit protein bL21 (105 aa).

The protein belongs to the bacterial ribosomal protein bL21 family. As to quaternary structure, part of the 50S ribosomal subunit. Contacts protein L20.

Functionally, this protein binds to 23S rRNA in the presence of protein L20. The polypeptide is Large ribosomal subunit protein bL21 (Methylobacterium sp. (strain 4-46)).